The sequence spans 61 residues: Cobrotoxin-c (61 aa).

4 cysteine pairs are disulfide-bonded: cysteine 3–cysteine 23, cysteine 17–cysteine 40, cysteine 42–cysteine 53, and cysteine 54–cysteine 59.

The protein belongs to the three-finger toxin family. Short-chain subfamily. Type I alpha-neurotoxin sub-subfamily. In terms of tissue distribution, expressed by the venom gland.

It is found in the secreted. In terms of biological role, produces peripheral paralysis by blocking neuromuscular transmission at the postsynaptic site. Binds to the nicotinic acetylcholine receptor. The sequence is that of Cobrotoxin-c from Naja kaouthia (Monocled cobra).